The sequence spans 276 residues: Radial spoke head protein 9 homolog (276 aa).

Belongs to the flagellar radial spoke RSP9 family. As to quaternary structure, component of the axonemal radial spoke 1 (RS1) and 2 (RS2) complexes, at least composed of spoke head proteins RSPH1, RSPH3, RSPH9 and the cilia-specific component RSPH4A or sperm-specific component RSPH6A, spoke stalk proteins RSPH14, DNAJB13, DYDC1, ROPN1L and NME5, and the RS1 complex-specific anchor protein IQUB. Interacts with IQUB. Interacts with RSPH3B. Interacts with RSPH4A. Interacts with RSPH6A. Interacts with CFAP61. Interacts with LRRC23.

It localises to the cytoplasm. The protein localises to the cytoskeleton. It is found in the cilium axoneme. The protein resides in the flagellum axoneme. Its subcellular location is the cell projection. It localises to the kinocilium. In terms of biological role, functions as part of axonemal radial spoke complexes that play an important part in the motility of sperm and cilia. Essential for both the radial spoke head assembly and the central pair microtubule stability in ependymal motile cilia. Required for motility of olfactory and neural cilia and for the structural integrity of ciliary axonemes in both 9+0 and 9+2 motile cilia. This Bos taurus (Bovine) protein is Radial spoke head protein 9 homolog (RSPH9).